The primary structure comprises 287 residues: GTPase Era (287 aa).

Residues 6 to 178 (FSGTSVIIGK…IQNKLKIVPK (173 aa)) form the Era-type G domain. The interval 14–21 (GKPNVGKS) is G1. Position 14–21 (14–21 (GKPNVGKS)) interacts with GTP. Residues 40-44 (HTTQS) are G2. Residues 62–65 (DTPG) form a G3 region. Residues 62-66 (DTPGI) and 124-127 (NKID) each bind GTP. The interval 124 to 127 (NKID) is G4. Residues 154–156 (ISG) are G5. One can recognise a KH type-2 domain in the interval 207-282 (LGDELPYSIQ…SIYLSLKVIK (76 aa)).

It belongs to the TRAFAC class TrmE-Era-EngA-EngB-Septin-like GTPase superfamily. Era GTPase family. As to quaternary structure, monomer.

It localises to the cytoplasm. The protein resides in the cell membrane. Its function is as follows. An essential GTPase that binds both GDP and GTP, with rapid nucleotide exchange. Plays a role in 16S rRNA processing and 30S ribosomal subunit biogenesis and possibly also in cell cycle regulation and energy metabolism. The protein is GTPase Era of Buchnera aphidicola subsp. Baizongia pistaciae (strain Bp).